The chain runs to 166 residues: Small ribosomal subunit protein uS5 (166 aa).

Residues 12–75 (YIEKLVQVNR…EAARRNMIQV (64 aa)) form the S5 DRBM domain.

The protein belongs to the universal ribosomal protein uS5 family. In terms of assembly, part of the 30S ribosomal subunit. Contacts proteins S4 and S8.

Its function is as follows. With S4 and S12 plays an important role in translational accuracy. Functionally, located at the back of the 30S subunit body where it stabilizes the conformation of the head with respect to the body. This is Small ribosomal subunit protein uS5 from Pseudomonas syringae pv. tomato (strain ATCC BAA-871 / DC3000).